A 505-amino-acid chain; its full sequence is MLNRVRSAVAHLVSSGGAPPPRPKSPDLPNAASAPPAAAPEAPRSPPAKAGSGSATPAKAVEARASFSRPTFLQLSPGGLRRADDHAGRAVQSPPDTGRRLPWSTGYAEVINAGKSRHNEDQACCEVVYVEGRRSVTGVPREPSRGQGLCFYYWGLFDGHAGGGAAEMASRLLHRHIREQLKDLVEILQDPSPPPLCLPTTPGTPDSSDPSHLLGPQSCWSSQKEVSHESLVVGAVENAFQLMDEQMARERRGHQVEGGCCALVVIYLLGKVYVANAGDSRAIIVRNGEIIPMSREFTPETERQRLQLLGFLKPELLGSEFTHLEFPRRVLPKELGQRMLYRDQNMTGWAYKKIELEDLRFPLVCGEGKKARVMATIGVTRGLGDHSLKVCSSTLPIKPFLSCFPEVRVYDLTQYEHCPDDVLVLGTDGLWDVTTDCEVAATVDRVLSAYEPNDHSRYTALAQALVLGARGTPRDRGWRLPNNKLGSGDDISVFVIPLGGPGSYS.

The disordered stretch occupies residues 1–103 (MLNRVRSAVA…PPDTGRRLPW (103 aa)). Residues 27–50 (DLPNAASAPPAAAPEAPRSPPAKA) show a composition bias toward low complexity. 2 positions are modified to phosphoserine: serine 66 and serine 76. In terms of domain architecture, PPM-type phosphatase spans 104-498 (STGYAEVINA…DDISVFVIPL (395 aa)).

This sequence belongs to the PP2C family. In terms of assembly, interacts with UBE2I/UBC9.

It catalyses the reaction O-phospho-L-seryl-[protein] + H2O = L-seryl-[protein] + phosphate. The enzyme catalyses O-phospho-L-threonyl-[protein] + H2O = L-threonyl-[protein] + phosphate. This Homo sapiens (Human) protein is Protein phosphatase 1J (PPM1J).